A 357-amino-acid chain; its full sequence is Heat-inducible transcription repressor HrcA (357 aa).

It belongs to the HrcA family.

Functionally, negative regulator of class I heat shock genes (grpE-dnaK-dnaJ and groELS operons). Prevents heat-shock induction of these operons. The protein is Heat-inducible transcription repressor HrcA of Chlorobium limicola (strain DSM 245 / NBRC 103803 / 6330).